The following is a 100-amino-acid chain: Large ribosomal subunit protein uL23 (100 aa).

The protein belongs to the universal ribosomal protein uL23 family. Part of the 50S ribosomal subunit. Contacts protein L29, and trigger factor when it is bound to the ribosome.

Functionally, one of the early assembly proteins it binds 23S rRNA. One of the proteins that surrounds the polypeptide exit tunnel on the outside of the ribosome. Forms the main docking site for trigger factor binding to the ribosome. The polypeptide is Large ribosomal subunit protein uL23 (Acaryochloris marina (strain MBIC 11017)).